We begin with the raw amino-acid sequence, 698 residues long: DNA ligase (698 aa).

Residues aspartate 40–aspartate 44, serine 89–leucine 90, and glutamate 123 each bind NAD(+). Lysine 125 (N6-AMP-lysine intermediate) is an active-site residue. NAD(+) is bound by residues arginine 146, glutamate 184, lysine 300, and lysine 324. Residues cysteine 417, cysteine 420, cysteine 435, and cysteine 441 each coordinate Zn(2+). A BRCT domain is found at serine 618–aspartate 698.

Belongs to the NAD-dependent DNA ligase family. LigA subfamily. Mg(2+) is required as a cofactor. It depends on Mn(2+) as a cofactor.

The catalysed reaction is NAD(+) + (deoxyribonucleotide)n-3'-hydroxyl + 5'-phospho-(deoxyribonucleotide)m = (deoxyribonucleotide)n+m + AMP + beta-nicotinamide D-nucleotide.. DNA ligase that catalyzes the formation of phosphodiester linkages between 5'-phosphoryl and 3'-hydroxyl groups in double-stranded DNA using NAD as a coenzyme and as the energy source for the reaction. It is essential for DNA replication and repair of damaged DNA. This is DNA ligase from Paramagnetospirillum magneticum (strain ATCC 700264 / AMB-1) (Magnetospirillum magneticum).